The chain runs to 89 residues: MVTAVAAKEEPVTSFAKDQLRAIIERIERLEEEKKTISDDIRDVYAEAKGNGYDVKALRTIVRMRKQDANERQEQETILETYMHALGML.

Belongs to the UPF0335 family.

The polypeptide is UPF0335 protein Nwi_0989 (Nitrobacter winogradskyi (strain ATCC 25391 / DSM 10237 / CIP 104748 / NCIMB 11846 / Nb-255)).